The chain runs to 504 residues: ATP synthase subunit alpha (504 aa).

171–178 (GDRQTGKT) provides a ligand contact to ATP.

It belongs to the ATPase alpha/beta chains family. As to quaternary structure, F-type ATPases have 2 components, CF(1) - the catalytic core - and CF(0) - the membrane proton channel. CF(1) has five subunits: alpha(3), beta(3), gamma(1), delta(1), epsilon(1). CF(0) has three main subunits: a(1), b(2) and c(9-12). The alpha and beta chains form an alternating ring which encloses part of the gamma chain. CF(1) is attached to CF(0) by a central stalk formed by the gamma and epsilon chains, while a peripheral stalk is formed by the delta and b chains.

It localises to the cell inner membrane. The catalysed reaction is ATP + H2O + 4 H(+)(in) = ADP + phosphate + 5 H(+)(out). Functionally, produces ATP from ADP in the presence of a proton gradient across the membrane. The alpha chain is a regulatory subunit. This chain is ATP synthase subunit alpha, found in Sulfurovum sp. (strain NBC37-1).